The following is a 264-amino-acid chain: Zinc import ATP-binding protein ZnuC (264 aa).

In terms of domain architecture, ABC transporter spans I11–Q226. G43–S50 provides a ligand contact to ATP.

Belongs to the ABC transporter superfamily. Zinc importer (TC 3.A.1.15.5) family. The complex is composed of two ATP-binding proteins (ZnuC), two transmembrane proteins (ZnuB) and a solute-binding protein (ZnuA).

Its subcellular location is the cell inner membrane. The catalysed reaction is Zn(2+)(out) + ATP(in) + H2O(in) = Zn(2+)(in) + ADP(in) + phosphate(in) + H(+)(in). In terms of biological role, part of the ABC transporter complex ZnuABC involved in zinc import. Responsible for energy coupling to the transport system. This chain is Zinc import ATP-binding protein ZnuC, found in Mannheimia succiniciproducens (strain KCTC 0769BP / MBEL55E).